A 1032-amino-acid polypeptide reads, in one-letter code: Beta-galactosidase (1032 aa).

Residues N100 and D198 each contribute to the substrate site. D198 lines the Na(+) pocket. Positions 413, 415, and 458 each coordinate Mg(2+). Residues E458 and 534–537 each bind substrate; that span reads EYAH. E458 functions as the Proton donor in the catalytic mechanism. Residue E534 is the Nucleophile of the active site. N594 is a Mg(2+) binding site. Na(+) is bound by residues F598 and N601. Substrate is bound by residues N601 and W1006.

This sequence belongs to the glycosyl hydrolase 2 family. As to quaternary structure, homotetramer. Mg(2+) serves as cofactor. The cofactor is Na(+).

It carries out the reaction Hydrolysis of terminal non-reducing beta-D-galactose residues in beta-D-galactosides.. This is Beta-galactosidase from Vibrio vulnificus (strain CMCP6).